The chain runs to 104 residues: MPSEGTWVYVVNLRRVYWGRRTRRAIRAVRMVREFVRRHTKADEVVIDNELNNYIWSRSREKPPARVKIIVSIREEEPEEGGERIRKAVVRLAGRKLRPGRYKG.

Belongs to the eukaryotic ribosomal protein eL31 family.

The polypeptide is Large ribosomal subunit protein eL31 (rpl31e) (Aeropyrum pernix (strain ATCC 700893 / DSM 11879 / JCM 9820 / NBRC 100138 / K1)).